The primary structure comprises 209 residues: Pyroglutamyl-peptidase 1 (209 aa).

Active-site residues include E85, C149, and H168.

This sequence belongs to the peptidase C15 family. As to quaternary structure, monomer.

It is found in the cytoplasm. It catalyses the reaction Release of an N-terminal pyroglutamyl group from a polypeptide, the second amino acid generally not being Pro.. Removes 5-oxoproline from various penultimate amino acid residues except L-proline. This Rattus norvegicus (Rat) protein is Pyroglutamyl-peptidase 1 (Pgpep1).